The following is a 154-amino-acid chain: Cyclin-dependent protein kinase inhibitor SMR14 (154 aa).

Positions 1-111 (MSKIKIFHLF…RPPRKPKAIP (111 aa)) are disordered. The segment covering 24 to 37 (SLLVPSKSDSLDSS) has biased composition (low complexity). The segment covering 74–83 (KWECKDEESP) has biased composition (basic and acidic residues).

Probable cyclin-dependent protein kinase (CDK) inhibitor that functions as a repressor of mitosis in the endoreduplication cell cycle. This Arabidopsis thaliana (Mouse-ear cress) protein is Cyclin-dependent protein kinase inhibitor SMR14.